Reading from the N-terminus, the 319-residue chain is Beta-ketoacyl-[acyl-carrier-protein] synthase III (319 aa).

Active-site residues include C112 and H246. An ACP-binding region spans residues 247–251; sequence QANKR. N276 is an active-site residue.

Belongs to the thiolase-like superfamily. FabH family. In terms of assembly, homodimer.

The protein resides in the cytoplasm. The enzyme catalyses malonyl-[ACP] + acetyl-CoA + H(+) = 3-oxobutanoyl-[ACP] + CO2 + CoA. It participates in lipid metabolism; fatty acid biosynthesis. Its function is as follows. Catalyzes the condensation reaction of fatty acid synthesis by the addition to an acyl acceptor of two carbons from malonyl-ACP. Catalyzes the first condensation reaction which initiates fatty acid synthesis and may therefore play a role in governing the total rate of fatty acid production. Possesses both acetoacetyl-ACP synthase and acetyl transacylase activities. Its substrate specificity determines the biosynthesis of branched-chain and/or straight-chain of fatty acids. The polypeptide is Beta-ketoacyl-[acyl-carrier-protein] synthase III (Psychromonas ingrahamii (strain DSM 17664 / CCUG 51855 / 37)).